A 310-amino-acid chain; its full sequence is Calcium homeostasis modulator protein 5 (310 aa).

Helical transmembrane passes span 17–37 (TIGY…FSMV), 49–69 (FPYG…VGFF), 101–121 (LIKV…VALL), and 181–201 (QILG…GTCY).

This sequence belongs to the CALHM family.

The protein localises to the membrane. Its function is as follows. Pore-forming subunit of a voltage-gated ion channel. This chain is Calcium homeostasis modulator protein 5 (calhm5.1), found in Danio rerio (Zebrafish).